The following is an 80-amino-acid chain: Exodeoxyribonuclease 7 small subunit (80 aa).

This sequence belongs to the XseB family. As to quaternary structure, heterooligomer composed of large and small subunits.

It localises to the cytoplasm. It catalyses the reaction Exonucleolytic cleavage in either 5'- to 3'- or 3'- to 5'-direction to yield nucleoside 5'-phosphates.. In terms of biological role, bidirectionally degrades single-stranded DNA into large acid-insoluble oligonucleotides, which are then degraded further into small acid-soluble oligonucleotides. In Rickettsia typhi (strain ATCC VR-144 / Wilmington), this protein is Exodeoxyribonuclease 7 small subunit.